We begin with the raw amino-acid sequence, 304 residues long: Killer cell immunoglobulin-like receptor 2DS2 (304 aa).

An N-terminal signal peptide occupies residues 1–21; the sequence is MSLMVVSMACVGFFLLQGAWP. Residues 22–245 are Extracellular-facing; sequence HEGVHRKPSL…SKTGNPRHLH (224 aa). 2 Ig-like C2-type domains span residues 42–107 and 142–205; these read EETV…VTHS and GESV…FRDS. 2 cysteine pairs are disulfide-bonded: C49–C100 and C149–C198. N-linked (GlcNAc...) asparagine glycosylation is found at N84, N178, and N211. A disordered region spans residues 220 to 239; the sequence is VTGNPSNSWPSPTEPSSKTG. Residues 246–265 form a helical membrane-spanning segment; it reads VLIGTSVVKIPFTILLFFLL. Residues 266–304 are Cytoplasmic-facing; it reads HRWCSNKKNAAVMDQEPAGNRTVNSEDSDEQDHQEVSYA. The tract at residues 280-304 is disordered; that stretch reads QEPAGNRTVNSEDSDEQDHQEVSYA.

It belongs to the immunoglobulin superfamily.

It is found in the cell membrane. In terms of biological role, receptor on natural killer (NK) cells for HLA-C alleles. Does not inhibit the activity of NK cells. The polypeptide is Killer cell immunoglobulin-like receptor 2DS2 (Homo sapiens (Human)).